The primary structure comprises 353 residues: Guanine nucleotide-binding protein alpha-1 subunit (353 aa).

The interval 1–26 (MGCGMSTEEKEGKARNEEIENQLKRD) is disordered. A lipid anchor (N-myristoyl glycine) is attached at G2. A lipid anchor (S-palmitoyl cysteine) is attached at C3. Basic and acidic residues predominate over residues 7–26 (TEEKEGKARNEEIENQLKRD). A G-alpha domain is found at 32-353 (NEIKMLLLGA…QENLRLCGLI (322 aa)). The tract at residues 35–48 (KMLLLGAGESGKST) is G1 motif. The GTP site is built by E43, S44, G45, K46, S47, T48, D150, L175, T181, G203, N269, K270, D272, and A325. Position 47 (S47) interacts with Mg(2+). The G2 motif stretch occupies residues 173 to 181 (DVLRSRVKT). A Mg(2+)-binding site is contributed by T181. Residues 196-205 (YRMFDVGGQR) are G3 motif. Residues 265–272 (ILFLNKID) are G4 motif. The G5 motif stretch occupies residues 323-328 (TCATDT).

The protein belongs to the G-alpha family. G(q) subfamily. In terms of assembly, g proteins are composed of 3 units; alpha, beta and gamma. The alpha chain contains the guanine nucleotide binding site. The cofactor is Mg(2+).

Functionally, guanine nucleotide-binding proteins (G proteins) are involved as modulators or transducers in various transmembrane signaling systems. The sequence is that of Guanine nucleotide-binding protein alpha-1 subunit (gna-1) from Neurospora crassa (strain ATCC 24698 / 74-OR23-1A / CBS 708.71 / DSM 1257 / FGSC 987).